Consider the following 122-residue polypeptide: Nitrogen fixation nifHD region GlnB-like protein 2 (122 aa).

This sequence belongs to the P(II) protein family.

In terms of biological role, could be involved in the regulation of nitrogen fixation. The chain is Nitrogen fixation nifHD region GlnB-like protein 2 (glnBB) from Methanobacterium ivanovii.